The primary structure comprises 1620 residues: ABC-type organic anion transporter ABCA8A (1620 aa).

7 helical membrane-spanning segments follow: residues 30–50, 224–244, 263–283, 294–314, 328–348, 357–377, and 397–417; these read TFLE…FLQL, CFLF…SAGV, SAFW…VTLL, VFLT…LSLI, FLTD…GFTA, LEWL…VQLL, and IGTI…TFYF. Residues Asn-454 and Asn-482 are each glycosylated (N-linked (GlcNAc...) asparagine). Residues 478–713 form the ABC transporter 1 domain; the sequence is IRIRNLTKDY…WGIGYHLSLQ (236 aa). 514–521 is an ATP binding site; the sequence is GHSGAGKS. Residues 861–881 form a helical membrane-spanning segment; sequence IVILILVLGIGLLHILSANIY. The N-linked (GlcNAc...) asparagine glycan is linked to Asn-967. The next 7 helical transmembrane spans lie at 979–999, 1019–1039, 1068–1088, 1105–1125, 1133–1153, 1159–1179, and 1196–1216; these read CFPV…APSA, YLAY…YISM, ALFE…AFYA, ILYV…ISFI, SGLW…FMLI, ISLF…CTLL, and EYSY…VVIL. Positions 1284–1517 constitute an ABC transporter 2 domain; it reads LRKEYKGKKK…FGKEYLLEMK (234 aa). 1322-1329 contacts ATP; that stretch reads GHNGAGKS.

This sequence belongs to the ABC transporter superfamily. ABCA family. In terms of tissue distribution, expressed in lung, heart, liver, skeletal muscle and testis. Highly expressed in the liver, and is also abundant in heart and skeletal muscle. Highly expressed in heart.

Its subcellular location is the cell membrane. The protein localises to the basolateral cell membrane. The catalysed reaction is taurocholate(in) + ATP + H2O = taurocholate(out) + ADP + phosphate + H(+). It catalyses the reaction cholesterol(in) + ATP + H2O = cholesterol(out) + ADP + phosphate + H(+). Its activity is regulated as follows. Cholesterol efflux is increased by extracellularly applied taurocholate. Its function is as follows. Mediates cholesterol and taurocholate efflux. Through the interaction with ABCA1 potentiates the cholesterol efflux to lipid-free APOA1, in turn regulates high-density lipoprotein cholesterol levels. The polypeptide is ABC-type organic anion transporter ABCA8A (Mus musculus (Mouse)).